Reading from the N-terminus, the 247-residue chain is V-type proton ATPase subunit D (247 aa).

The protein belongs to the V-ATPase D subunit family. As to quaternary structure, V-ATPase is a heteromultimeric enzyme made up of two complexes: the ATP-hydrolytic V1 complex and the proton translocation V0 complex. The V1 complex consists of three catalytic AB heterodimers that form a heterohexamer, three peripheral stalks each consisting of EG heterodimers, one central rotor including subunits D and F, and the regulatory subunits C and H. The proton translocation complex V0 consists of the proton transport subunit a, a ring of proteolipid subunits c9c'', rotary subunit d, subunits e and f, and the accessory subunits ATP6AP1/Ac45 and ATP6AP2/PRR. Interacts with SNX10. Expressed in brain (at protein level). Present in tissues active in secretion. Amounts elevated in brain, kidney and testis.

The protein localises to the membrane. It localises to the cytoplasmic vesicle. Its subcellular location is the clathrin-coated vesicle membrane. It is found in the cytoplasm. The protein resides in the cytoskeleton. The protein localises to the microtubule organizing center. It localises to the centrosome. Its subcellular location is the cell projection. It is found in the cilium. Functionally, subunit of the V1 complex of vacuolar(H+)-ATPase (V-ATPase), a multisubunit enzyme composed of a peripheral complex (V1) that hydrolyzes ATP and a membrane integral complex (V0) that translocates protons. V-ATPase is responsible for acidifying and maintaining the pH of intracellular compartments and in some cell types, is targeted to the plasma membrane, where it is responsible for acidifying the extracellular environment. May play a role in cilium biogenesis through regulation of the transport and the localization of proteins to the cilium. The sequence is that of V-type proton ATPase subunit D (ATP6V1D) from Bos taurus (Bovine).